The primary structure comprises 205 residues: MRVLLTGFEPFAGELVNPSWEVASRLAERRISGCTVAAERLPTVFGASIACLRTALERHRPQAVVCLGEAGGRAAISIERVALNLDEARIPDNKGQQPVEIPVEPGAPAAYFATLPVRAIVAKLLAAGIPAEISRTAGGFVCNHTFYGLMHHLGQATPVRAGFIHIPYLPEQAVRYPGKASMELATTLRGIEMVLEVLRSEQNVL.

Catalysis depends on residues Glu-79, Cys-142, and His-165.

Belongs to the peptidase C15 family. Homotetramer.

The protein resides in the cytoplasm. It catalyses the reaction Release of an N-terminal pyroglutamyl group from a polypeptide, the second amino acid generally not being Pro.. Removes 5-oxoproline from various penultimate amino acid residues except L-proline. The sequence is that of Pyrrolidone-carboxylate peptidase from Gloeobacter violaceus (strain ATCC 29082 / PCC 7421).